A 581-amino-acid chain; its full sequence is MSAGEVERLVELSGGTGGDEEEEWLYGGPWDVHVHSDLAKDLDENEVERPEEENASANPPSGIEEEAAENGVAKPKVTETEDDSDSDSDDDEDDVHVTIGDIKTGAPQYGSYGTAPVNLNIKAGGRVYGNTGTKVKGVDLDAPGSINGVPLLEVDLDSFEDKPWRKPGADLSDYFNYGFNEDTWKAYCEKQKRIRMGLEVIPVTSTTNKITVQQGRTGNSEKEAALPSTKAEFTSPPSLFKTGLPPSRNSTSSQSQTSTASRKASSSVGKWQDRYGRAESPDLRRLPGAIDVIGQTITISRVEGRRRANENSNIQVLSDRSATEVDNNFSKPPPFFPPGAPPTHLPPPPFLPPPPTVSTAPPLIPPPGIPITVPPPGFPPPPGAPPPSLIPTIESGHSSGYDSRSARAFPYGNVAFPHLTSSAPSWPSLVDTTKQWDYYARREKDRDRDRERDRDRERERDRDRERERTRERERERDHSPTPSVFNSDEERYRYREYAERGYERHRASREKEERHRERRHREKEETRHKSSRSNSRRRHESEEGDSHRRHKHKKSKRSKEGKEAGSEPVPEQESTEAAPAE.

Basic and acidic residues-rich tracts occupy residues 1–10 and 32–42; these read MSAGEVERLV and VHVHSDLAKDL. 3 disordered regions span residues 1 to 95, 211 to 282, and 320 to 581; these read MSAG…EDDV, TVQQ…ESPD, and RSAT…APAE. Positions 1–110 are sufficient for interaction with PAPOLA; it reads MSAGEVERLV…DIKTGAPQYG (110 aa). The necessary for stimulating PAPOLA activity stretch occupies residues 1 to 332; the sequence is MSAGEVERLV…TEVDNNFSKP (332 aa). 2 stretches are compositionally biased toward acidic residues: residues 43 to 54 and 80 to 94; these read DENEVERPEEEN and TEDD…DEDD. Serine 84, serine 86, and serine 88 each carry phosphoserine. The tract at residues 136-219 is sufficient for interaction with CPSF4; the sequence is KGVDLDAPGS…ITVQQGRTGN (84 aa). A compositionally biased stretch (low complexity) spans 247 to 267; sequence SRNSTSSQSQTSTASRKASSS. The span at 271–282 shows a compositional bias: basic and acidic residues; the sequence is WQDRYGRAESPD. At serine 280 the chain carries Phosphoserine. Over residues 320 to 330 the composition is skewed to polar residues; it reads RSATEVDNNFS. Pro residues predominate over residues 331–389; that stretch reads KPPPFFPPGAPPTHLPPPPFLPPPPTVSTAPPLIPPPGIPITVPPPGFPPPPGAPPPSL. Tyrosine 411 is modified (phosphotyrosine). Positions 419-435 are enriched in polar residues; that stretch reads LTSSAPSWPSLVDTTKQ. The interval 428–581 is sufficient for interaction with CPSF1 and CSTF3; it reads SLVDTTKQWD…QESTEAAPAE (154 aa). Basic and acidic residues predominate over residues 439–479; sequence YARREKDRDRDRERDRDRERERDRDRERERTRERERERDHS. Residues 442–477 form an arg/Asp/Glu-rich domain region; that stretch reads REKDRDRDRERDRDRERERDRDRERERTRERERERD. The segment at 478–535 is sufficient for interaction with AHCYL1; the sequence is HSPTPSVFNSDEERYRYREYAERGYERHRASREKEERHRERRHREKEETRHKSSRSNS. Serine 479 is subject to Phosphoserine. Threonine 481 carries the phosphothreonine modification. A phosphoserine mark is found at serine 483 and serine 487. Positions 488–515 are enriched in basic and acidic residues; that stretch reads DEERYRYREYAERGYERHRASREKEERH. The span at 529–538 shows a compositional bias: basic residues; the sequence is KSSRSNSRRR. Serine 541 is subject to Phosphoserine. The span at 547-557 shows a compositional bias: basic residues; the sequence is HRRHKHKKSKR.

The protein belongs to the FIP1 family. Component of the cleavage and polyadenylation specificity factor (CPSF) complex, composed of CPSF1, CPSF2, CPSF3, CPSF4 and FIP1L1. Found in a complex with CPSF1, FIP1L1 and PAPOLA. Interacts with CPSF1, CPSF4, CSTF2 and CSTF3. Interacts with AHCYL1 (when phosphorylated); the interaction is direct and associates AHCYL1 with the CPSF complex and RNA. Interacts with PAPOLA; the interaction seems to be increased by the interaction with AHCYL1. Interacts with NUDT21/CPSF5; this interaction occurs in a RNA sequence-specific manner. Interacts (preferentially via unphosphorylated form and Arg/Glu/Asp-rich domain) with CPSF6 (via Arg/Ser-rich domain); this interaction mediates, at least in part, the interaction between the CFIm and CPSF complexes and may be inhibited by CPSF6 hyper-phosphorylation. Interacts (preferentially via unphosphorylated form and Arg/Asp/Glu-rich domain) with CPSF7 (via Arg/Ser-rich domain); this interaction mediates, at least in part, the interaction between the CFIm and CPSF complexes and may be inhibited by CPSF7 hyper-phosphorylation.

Its subcellular location is the nucleus. Its function is as follows. Component of the cleavage and polyadenylation specificity factor (CPSF) complex that plays a key role in pre-mRNA 3'-end formation, recognizing the AAUAAA signal sequence and interacting with poly(A) polymerase and other factors to bring about cleavage and poly(A) addition. FIP1L1 contributes to poly(A) site recognition and stimulates poly(A) addition. Binds to U-rich RNA sequence elements surrounding the poly(A) site. May act to tether poly(A) polymerase to the CPSF complex. The protein is Pre-mRNA 3'-end-processing factor FIP1 (Fip1l1) of Mus musculus (Mouse).